A 31-amino-acid chain; its full sequence is Protamine-YI (31 aa).

Residues 1-31 are disordered; it reads ARRRRSSSRPIRRRRPRRRTTRRRRAGRRRR.

In terms of tissue distribution, testis.

The protein resides in the nucleus. It is found in the chromosome. Functionally, protamines substitute for histones in the chromatin of sperm during the haploid phase of spermatogenesis. They compact sperm DNA into a highly condensed, stable and inactive complex. The chain is Protamine-YI from Clupea harengus (Atlantic herring).